We begin with the raw amino-acid sequence, 274 residues long: Nitrogenase iron protein (274 aa).

8–15 (GKGGIGKS) serves as a coordination point for ATP. Cysteine 94 contributes to the [4Fe-4S] cluster binding site. Arginine 97 carries the post-translational modification ADP-ribosylarginine; by dinitrogenase reductase ADP-ribosyltransferase. Cysteine 131 is a binding site for [4Fe-4S] cluster.

Belongs to the NifH/BchL/ChlL family. In terms of assembly, homodimer. Requires [4Fe-4S] cluster as cofactor. Post-translationally, the reversible ADP-ribosylation of Arg-97 inactivates the nitrogenase reductase and regulates nitrogenase activity.

It catalyses the reaction N2 + 8 reduced [2Fe-2S]-[ferredoxin] + 16 ATP + 16 H2O = H2 + 8 oxidized [2Fe-2S]-[ferredoxin] + 2 NH4(+) + 16 ADP + 16 phosphate + 6 H(+). Its function is as follows. The key enzymatic reactions in nitrogen fixation are catalyzed by the nitrogenase complex, which has 2 components: the iron protein and the molybdenum-iron protein. The sequence is that of Nitrogenase iron protein from Chlorobaculum parvum (strain DSM 263 / NCIMB 8327) (Chlorobium vibrioforme subsp. thiosulfatophilum).